Here is a 551-residue protein sequence, read N- to C-terminus: Membrane protein insertase YidC (551 aa).

Residues 3 to 23 (ANHIRILLLVTIAIMFISLMG) form a helical membrane-spanning segment. The span at 33–47 (NTKQQTSATQNNSHY) shows a compositional bias: polar residues. Residues 33-59 (NTKQQTSATQNNSHYDNADSSTNTDVT) are disordered. A compositionally biased stretch (low complexity) spans 50-59 (ADSSTNTDVT). 3 helical membrane-spanning segments follow: residues 361–381 (LVGN…LIFY), 431–451 (LSGC…YWVL), and 504–524 (VMMF…SGLV).

The protein belongs to the OXA1/ALB3/YidC family. Type 1 subfamily. Interacts with the Sec translocase complex via SecD. Specifically interacts with transmembrane segments of nascent integral membrane proteins during membrane integration.

Its subcellular location is the cell inner membrane. In terms of biological role, required for the insertion and/or proper folding and/or complex formation of integral membrane proteins into the membrane. Involved in integration of membrane proteins that insert both dependently and independently of the Sec translocase complex, as well as at least some lipoproteins. Aids folding of multispanning membrane proteins. The sequence is that of Membrane protein insertase YidC from Francisella tularensis subsp. tularensis (strain SCHU S4 / Schu 4).